Reading from the N-terminus, the 425-residue chain is MTEQTKAYFNTPVHERDPLVAQALDNERKRQQDQIELIASENIVSRAVLDALGHEMTNKTLEGYPGNRFHGGGQFVDVVEQAAIDRAKELFGCAYANVQPHSGTQANLAVFFLLLKPGDKVLSLDLAAGGHLSHGMKGNLSGRWFESHNYNVDPETEVIDYDEMERIAEEVRPTLLITGGSAYPRELDFERMGKIAKKVGAWFLVDMAHIAGLVAGGAHPSPFPHADIVTCTTTKTLRGPRGGLILTNNEAWFKKLQSAVFPGVQGSLHSNVLAAKAVCLGEALRPDFKVYAAQVKANARVLAETLIARGVRIVSGGTDTHIVLVDLSSKGLNGKQAEDLLARANITANKNPIPNDSPRPAEWVGMRLGVSAATTRGMKEDEFRTLGTVIADLIEAEAAGNADGVVEGAKAKVATLTAAFPVYAH.

Residues Leu126 and 130-132 (GHL) contribute to the (6S)-5,6,7,8-tetrahydrofolate site. Position 235 is an N6-(pyridoxal phosphate)lysine (Lys235).

It belongs to the SHMT family. Homodimer. Pyridoxal 5'-phosphate serves as cofactor.

It is found in the cytoplasm. The catalysed reaction is (6R)-5,10-methylene-5,6,7,8-tetrahydrofolate + D-alanine + H2O = 2-methylserine + (6S)-5,6,7,8-tetrahydrofolate. Its pathway is one-carbon metabolism; tetrahydrofolate interconversion. Its function is as follows. Catalyzes the reversible interconversion of alpha-methyl-L-serine to D-alanine with tetrahydrofolate (THF) serving as the one-carbon carrier. Cannot use alpha-methyl-D-serine, L-serine, D-serine or L-alanine. The sequence is that of 2-methylserine hydroxymethyltransferase from Aminobacter sp.